Here is a 261-residue protein sequence, read N- to C-terminus: Indole-3-glycerol phosphate synthase (261 aa).

Belongs to the TrpC family.

The catalysed reaction is 1-(2-carboxyphenylamino)-1-deoxy-D-ribulose 5-phosphate + H(+) = (1S,2R)-1-C-(indol-3-yl)glycerol 3-phosphate + CO2 + H2O. The protein operates within amino-acid biosynthesis; L-tryptophan biosynthesis; L-tryptophan from chorismate: step 4/5. In Burkholderia ambifaria (strain MC40-6), this protein is Indole-3-glycerol phosphate synthase.